A 276-amino-acid polypeptide reads, in one-letter code: Digeranylgeranylglyceryl phosphate synthase (276 aa).

Transmembrane regions (helical) follow at residues 14–34 (VNTL…GGAV), 90–110 (VVLF…AVCI), 144–164 (FVFG…AALA), 200–220 (ALAV…VPYL), and 221–241 (VGVF…VMVV).

This sequence belongs to the UbiA prenyltransferase family. DGGGP synthase subfamily. Mg(2+) is required as a cofactor.

The protein localises to the cell membrane. It catalyses the reaction sn-3-O-(geranylgeranyl)glycerol 1-phosphate + (2E,6E,10E)-geranylgeranyl diphosphate = 2,3-bis-O-(geranylgeranyl)-sn-glycerol 1-phosphate + diphosphate. It participates in membrane lipid metabolism; glycerophospholipid metabolism. In terms of biological role, prenyltransferase that catalyzes the transfer of the geranylgeranyl moiety of geranylgeranyl diphosphate (GGPP) to the C2 hydroxyl of (S)-3-O-geranylgeranylglyceryl phosphate (GGGP). This reaction is the second ether-bond-formation step in the biosynthesis of archaeal membrane lipids. The chain is Digeranylgeranylglyceryl phosphate synthase from Halobacterium salinarum (strain ATCC 29341 / DSM 671 / R1).